Reading from the N-terminus, the 501-residue chain is Lysine--tRNA ligase (501 aa).

Residues Glu411 and Glu418 each coordinate Mg(2+).

It belongs to the class-II aminoacyl-tRNA synthetase family. In terms of assembly, homodimer. It depends on Mg(2+) as a cofactor.

It localises to the cytoplasm. It catalyses the reaction tRNA(Lys) + L-lysine + ATP = L-lysyl-tRNA(Lys) + AMP + diphosphate. This is Lysine--tRNA ligase from Aliivibrio fischeri (strain ATCC 700601 / ES114) (Vibrio fischeri).